The following is a 981-amino-acid chain: Rab3 GTPase-activating protein catalytic subunit (981 aa).

Residues Ser-83, Ser-379, Ser-536, Ser-579, Ser-581, and Ser-590 each carry the phosphoserine modification. The interval Gly-532–Leu-558 is disordered. The disordered stretch occupies residues Asp-591 to Leu-614. Ser-664 bears the Phosphoserine mark.

It belongs to the Rab3-GAP catalytic subunit family. In terms of assembly, the Rab3 GTPase-activating complex is a heterodimer composed of Rab3gap1 and Rab3gap2. The Rab3 GTPase-activating complex interacts with DMXL2. Interacts with LMAN1. In terms of tissue distribution, in the eye, it is highly expressed within the lens, particularly in the anterior lens epithelium and in a ring corresponding to the equatorial region where anterior cells are differentiating into lens fibers. Also highly expressed in the retina.

The protein localises to the cytoplasm. It localises to the endoplasmic reticulum. The protein resides in the golgi apparatus. Its subcellular location is the cis-Golgi network. Catalytic subunit of the Rab3 GTPase-activating (Rab3GAP) complex composed of RAB3GAP1 and RAB3GAP2, which has GTPase-activating protein (GAP) activity towards various Rab3 subfamily members (RAB3A, RAB3B, RAB3C and RAB3D), RAB5A and RAB43, and guanine nucleotide exchange factor (GEF) activity towards RAB18. As part of the Rab3GAP complex, acts as a GAP for Rab3 proteins by converting active RAB3-GTP to the inactive form RAB3-GDP. Rab3 proteins are involved in regulated exocytosis of neurotransmitters and hormones. The Rab3GAP complex, acts as a GEF for RAB18 by promoting the conversion of inactive RAB18-GDP to the active form RAB18-GTP. Recruits and stabilizes RAB18 at the cis-Golgi membrane where RAB18 is most likely activated. Also involved in RAB18 recruitment at the endoplasmic reticulum (ER) membrane where it maintains proper ER structure. Required for normal eye and brain development. May participate in neurodevelopmental processes such as proliferation, migration and differentiation before synapse formation, and non-synaptic vesicular release of neurotransmitters. In Mus musculus (Mouse), this protein is Rab3 GTPase-activating protein catalytic subunit.